A 103-amino-acid polypeptide reads, in one-letter code: UPF0473 protein LBA0420 (103 aa).

This sequence belongs to the UPF0473 family.

In Lactobacillus acidophilus (strain ATCC 700396 / NCK56 / N2 / NCFM), this protein is UPF0473 protein LBA0420.